The sequence spans 345 residues: Phosphoribosylformylglycinamidine cyclo-ligase (345 aa).

The protein belongs to the AIR synthase family.

The protein resides in the cytoplasm. It carries out the reaction 2-formamido-N(1)-(5-O-phospho-beta-D-ribosyl)acetamidine + ATP = 5-amino-1-(5-phospho-beta-D-ribosyl)imidazole + ADP + phosphate + H(+). It functions in the pathway purine metabolism; IMP biosynthesis via de novo pathway; 5-amino-1-(5-phospho-D-ribosyl)imidazole from N(2)-formyl-N(1)-(5-phospho-D-ribosyl)glycinamide: step 2/2. This is Phosphoribosylformylglycinamidine cyclo-ligase from Actinobacillus pleuropneumoniae serotype 5b (strain L20).